A 161-amino-acid chain; its full sequence is Globin CTT-VIIB-4 (161 aa).

The N-terminal stretch at 1-16 (MKFFAVLALCIVGAIA) is a signal peptide. Residues 18 to 161 (PLTADEASLV…NTMAVAVAHL (144 aa)) enclose the Globin domain. Residues His76 and His111 each coordinate heme b.

The protein belongs to the globin family. As to quaternary structure, homodimer.

The protein is Globin CTT-VIIB-4 (CTT-7B4) of Chironomus thummi thummi (Midge).